A 348-amino-acid polypeptide reads, in one-letter code: L-threonine 3-dehydrogenase (348 aa).

C42 lines the Zn(2+) pocket. Active-site charge relay system residues include T44 and H47. H67, E68, C97, C100, C103, and C111 together coordinate Zn(2+). NAD(+) is bound by residues L179, E199, R204, 266 to 268 (LGL), and 291 to 292 (IT).

This sequence belongs to the zinc-containing alcohol dehydrogenase family. As to quaternary structure, homotetramer. Zn(2+) serves as cofactor.

Its subcellular location is the cytoplasm. It carries out the reaction L-threonine + NAD(+) = (2S)-2-amino-3-oxobutanoate + NADH + H(+). It participates in amino-acid degradation; L-threonine degradation via oxydo-reductase pathway; glycine from L-threonine: step 1/2. Functionally, catalyzes the NAD(+)-dependent oxidation of L-threonine to 2-amino-3-ketobutyrate. To a lesser extent, also catalyzes the oxidation of L-serine, D-threonine, butan-2,3-diol, butan-1,2-diol, and propan-1,2-diol and cannot oxidize other L-amino acids. Cannot utilize NADP(H) instead of NAD(H). The protein is L-threonine 3-dehydrogenase of Pyrococcus furiosus (strain ATCC 43587 / DSM 3638 / JCM 8422 / Vc1).